The sequence spans 490 residues: MSRMAEQQLYIHGGYTSATSGRTFETINPANGNVLATVQAAGREDVDRAVKSAQQGQKIWASMTAMERSRILRRAVDILRERNDELAKLETLDTGKAYSETSTVDIVTGADVLEYYAGLIPALEGSQIPLRETSFVYTRREPLGVVAGIGAWNYPIQIALWKSAPALAAGNAMIFKPSEVTPLTALKLAEIYSEAGLPNGVFNVLPGVGAETGQYLTEHPGIAKVSFTGGVASGKKVMANSAASSLKEVTMELGGKSPLIVFDDADLDLAADIAMMANFFSSGQVCTNGTRVFVPAKCKAAFEQKILARVERIRAGDVFDPQTNFGPLVSFPHRDNVLRYIAKGKEEGARVLCGGDVLKGDGFDNGAWVAPTVFTDCSDDMTIVREEIFGPVMSILTYESEDEVIRRANDTDYGLAAGIVTADLNRAHRVIHQLEAGICWINTWGESPAEMPVGGYKHSGIGRENGMMTLQSYTQVKSIQVEMAKFQSIF.

T26, I27, and D93 together coordinate K(+). 150-152 lines the NAD(+) pocket; the sequence is GAW. The active-site Charge relay system is K162. NAD(+) is bound at residue 176-179; it reads KPSE. V180 serves as a coordination point for K(+). 230–233 serves as a coordination point for NAD(+); that stretch reads GVAS. L246 contributes to the K(+) binding site. E252 functions as the Proton acceptor in the catalytic mechanism. 3 residues coordinate NAD(+): G254, C286, and E387. Catalysis depends on C286, which acts as the Nucleophile. The residue at position 286 (C286) is a Cysteine sulfenic acid (-SOH). K(+)-binding residues include K457 and G460. Residue E464 is the Charge relay system of the active site.

This sequence belongs to the aldehyde dehydrogenase family. Dimer of dimers. It depends on K(+) as a cofactor.

The enzyme catalyses betaine aldehyde + NAD(+) + H2O = glycine betaine + NADH + 2 H(+). The protein operates within amine and polyamine biosynthesis; betaine biosynthesis via choline pathway; betaine from betaine aldehyde: step 1/1. Its function is as follows. Involved in the biosynthesis of the osmoprotectant glycine betaine. Catalyzes the irreversible oxidation of betaine aldehyde to the corresponding acid. This chain is Betaine aldehyde dehydrogenase, found in Escherichia coli (strain ATCC 8739 / DSM 1576 / NBRC 3972 / NCIMB 8545 / WDCM 00012 / Crooks).